Reading from the N-terminus, the 432-residue chain is Alpha-galactosidase (432 aa).

Residue 2–68 coordinates NAD(+); the sequence is KKITFIGAGS…PSVAINSYDD (67 aa). Asn148 lines the substrate pocket. A Mn(2+)-binding site is contributed by Cys169. The Proton donor role is filled by His170. His199 lines the Mn(2+) pocket.

It belongs to the glycosyl hydrolase 4 family. Homodimer. The cofactor is Mn(2+). Requires NAD(+) as cofactor.

The protein resides in the cytoplasm. The enzyme catalyses Hydrolysis of terminal, non-reducing alpha-D-galactose residues in alpha-D-galactosides, including galactose oligosaccharides, galactomannans and galactolipids.. Functionally, catalyzes the hydrolysis of melibiose and alpha-galactosides of the raffinose family of oligosaccharides (RFOs) such as raffinose and stachyose. Cannot act on polymeric substrates such as locust bean gum. This chain is Alpha-galactosidase, found in Bacillus subtilis (strain 168).